A 78-amino-acid polypeptide reads, in one-letter code: Small ribosomal subunit protein bS16 (78 aa).

The protein belongs to the bacterial ribosomal protein bS16 family.

The sequence is that of Small ribosomal subunit protein bS16 from Thermodesulfovibrio yellowstonii (strain ATCC 51303 / DSM 11347 / YP87).